The following is a 346-amino-acid chain: L-glyceraldehyde 3-phosphate reductase (346 aa).

12 residues coordinate NADP(+): tryptophan 33, aspartate 61, tyrosine 66, serine 168, glutamine 193, threonine 223, leucine 225, glutamine 227, lysine 233, serine 303, glutamine 307, and asparagine 311.

The protein belongs to the shaker potassium channel beta subunit family.

It catalyses the reaction a primary alcohol + NADP(+) = an aldehyde + NADPH + H(+). Functionally, aldo-keto reductase that catalyzes the stereospecific, NADPH-dependent reduction of L-glyceraldehyde 3-phosphate (L-GAP) to L-glycerol 3-phosphate (L-G3P). This is L-glyceraldehyde 3-phosphate reductase from Escherichia coli O157:H7.